The chain runs to 594 residues: Dictomallein-4 (594 aa).

The signal sequence occupies residues 1–18 (MKLVLIFLIINFLLIINC). One can recognise a Peptidase M66 domain in the interval 147-408 (PDVSQDYTLK…QNYFKNSIYY (262 aa)). Residue H300 coordinates Zn(2+). Residue E301 is part of the active site. The Zn(2+) site is built by H304 and H310.

Belongs to the dictomallein family. Zn(2+) is required as a cofactor.

The protein resides in the secreted. This Dictyostelium discoideum (Social amoeba) protein is Dictomallein-4 (dtmlD).